A 500-amino-acid polypeptide reads, in one-letter code: Probable trehalose-phosphate phosphatase 8 (500 aa).

It belongs to the trehalose phosphatase family. The cofactor is a divalent metal cation.

The catalysed reaction is alpha,alpha-trehalose 6-phosphate + H2O = alpha,alpha-trehalose + phosphate. The protein operates within glycan biosynthesis; trehalose biosynthesis. In terms of biological role, removes the phosphate from trehalose 6-phosphate to produce free trehalose. Trehalose accumulation in plant may improve abiotic stress tolerance. This is Probable trehalose-phosphate phosphatase 8 (TPP8) from Oryza sativa subsp. japonica (Rice).